Consider the following 399-residue polypeptide: MAREKFERNKPHVNIGTIGHVDHGKTTLTAAITNVLAKKGQAQAQDYGDIDGAPEERERGITINTAHVEYETDGRHYAHVDCPGHADYVKNMITGAAQMDGAIIVVAATDGAMAQTKEHILLAKQVGVPSLVVALNKCDMVDDAEMIELVEMEIRELLSSYDFPGDDIPVIQVSALKALEGDSEWEGKIDELMKSVDESIPEPEREVDKPFLMAVEDVFSITGRGTVATGRIERGKIKVGEEVEIVGIKDTRVTTVTGVEMFRKLLDEGMAGDNVGLLLRGVQKEDIERGMVLVKKGSITPHTKFEGEVYVLKKEEGGRHTPFFAGYRPQFYIRTTDVTGQITAFTADDGSNVEMVMPGDRIKMTGELICPVAIEQGMRFAIREGGRTIGAGVVSKIIK.

Residues 10 to 204 (KPHVNIGTIG…SVDESIPEPE (195 aa)) enclose the tr-type G domain. A G1 region spans residues 19–26 (GHVDHGKT). Residue 19–26 (GHVDHGKT) participates in GTP binding. Threonine 26 contributes to the Mg(2+) binding site. Residues 60-64 (GITIN) are G2. Residues 81–84 (DCPG) form a G3 region. Residues 81-85 (DCPGH) and 136-139 (NKCD) contribute to the GTP site. Residues 136–139 (NKCD) form a G4 region. The G5 stretch occupies residues 174–176 (SAL).

Belongs to the TRAFAC class translation factor GTPase superfamily. Classic translation factor GTPase family. EF-Tu/EF-1A subfamily. In terms of assembly, monomer.

It localises to the cytoplasm. It carries out the reaction GTP + H2O = GDP + phosphate + H(+). GTP hydrolase that promotes the GTP-dependent binding of aminoacyl-tRNA to the A-site of ribosomes during protein biosynthesis. The sequence is that of Elongation factor Tu from Prochlorococcus marinus (strain MIT 9211).